The sequence spans 512 residues: Glucose-6-phosphate 1-dehydrogenase (512 aa).

NADP(+) is bound by residues R61, E103–F104, and K171. Substrate is bound by residues H201, K205, E239, and D258. Residue H263 is the Proton acceptor of the active site. Residues K360 and K365 each contribute to the substrate site. Residues Q479–L512 are disordered. Residues K496–L512 show a composition bias toward basic and acidic residues.

It belongs to the glucose-6-phosphate dehydrogenase family.

It carries out the reaction D-glucose 6-phosphate + NADP(+) = 6-phospho-D-glucono-1,5-lactone + NADPH + H(+). Its pathway is carbohydrate degradation; pentose phosphate pathway; D-ribulose 5-phosphate from D-glucose 6-phosphate (oxidative stage): step 1/3. In terms of biological role, catalyzes the oxidation of glucose 6-phosphate to 6-phosphogluconolactone. The polypeptide is Glucose-6-phosphate 1-dehydrogenase (Chlamydia pneumoniae (Chlamydophila pneumoniae)).